The primary structure comprises 355 residues: Inositol-tetrakisphosphate 1-kinase 4 (355 aa).

Lys65 contacts 1D-myo-inositol 1,3,4-trisphosphate. 2 residues coordinate ATP: Arg101 and Lys146. The 212-residue stretch at 107–318 (VVSGLRTPVS…FFLEMLRGTR (212 aa)) folds into the ATP-grasp domain. 1D-myo-inositol 1,3,4-trisphosphate-binding residues include His157 and Lys190. ATP is bound by residues 179–190 (QEFVNHGGVLFK) and Ser205. Positions 225 to 248 (FANISNQPLPPPDDDGGAADDDTP) are disordered. Acidic residues predominate over residues 236 to 247 (PDDDGGAADDDT). The Mg(2+) site is built by Asp272, Asp289, and Asn291. A 1D-myo-inositol 1,3,4-trisphosphate-binding site is contributed by Asn291.

The protein belongs to the ITPK1 family. As to quaternary structure, monomer. The cofactor is Mg(2+).

It carries out the reaction 1D-myo-inositol 3,4,5,6-tetrakisphosphate + ATP = 1D-myo-inositol 1,3,4,5,6-pentakisphosphate + ADP + H(+). The catalysed reaction is 1D-myo-inositol 1,3,4-trisphosphate + ATP = 1D-myo-inositol 1,3,4,5-tetrakisphosphate + ADP + H(+). It catalyses the reaction 1D-myo-inositol 1,3,4-trisphosphate + ATP = 1D-myo-inositol 1,3,4,6-tetrakisphosphate + ADP + H(+). Functionally, kinase that can phosphorylate various inositol polyphosphate such as Ins(3,4,5,6)P4 or Ins(1,3,4)P3 and participates in phytic acid biosynthesis in developing seeds. Phytic acid is the primary storage form of phosphorus in cereal grains and other plant seeds. The chain is Inositol-tetrakisphosphate 1-kinase 4 (ITPK4) from Oryza sativa subsp. indica (Rice).